We begin with the raw amino-acid sequence, 237 residues long: MNYKYKTVLLKLSGEALKGDAEVYDKKCLEDIASQIIHLVKNGLKLGIVIGGGNIWRGKLGENIGMDAINADYMGMLATVMNGLALESTITKMGYDKIKVYSSLPIKTVTDDYNFKKARIKMNEGFISIFVGGTGYSYFTTDTNATIRAIEIGAEAILMAKNGVKGVYDKDPKQHKDAKFIKKISHQEIVDKQLRIMDLTAATLAKDANLKIEVFDMSGDNNIIKVLENKLESTIIE.

Residue 11–14 participates in ATP binding; that stretch reads KLSG. Glycine 52 serves as a coordination point for UMP. 2 residues coordinate ATP: glycine 53 and arginine 57. UMP-binding positions include aspartate 72 and 134 to 141; that span reads TGYSYFTT. ATP contacts are provided by asparagine 162, tyrosine 168, and aspartate 171.

This sequence belongs to the UMP kinase family. As to quaternary structure, homohexamer.

The protein localises to the cytoplasm. The enzyme catalyses UMP + ATP = UDP + ADP. It participates in pyrimidine metabolism; CTP biosynthesis via de novo pathway; UDP from UMP (UMPK route): step 1/1. Its activity is regulated as follows. Inhibited by UTP. Functionally, catalyzes the reversible phosphorylation of UMP to UDP. The polypeptide is Uridylate kinase (Mycoplasma capricolum subsp. capricolum (strain California kid / ATCC 27343 / NCTC 10154)).